Here is a 249-residue protein sequence, read N- to C-terminus: Small ribosomal subunit protein uS2 (249 aa).

This sequence belongs to the universal ribosomal protein uS2 family.

This Polynucleobacter necessarius subsp. necessarius (strain STIR1) protein is Small ribosomal subunit protein uS2.